Consider the following 448-residue polypeptide: Microtubule-associated protein tau (448 aa).

A compositionally biased stretch (basic and acidic residues) spans 1 to 16 (MAEPRQEFDVMEDHAQ). Positions 1–264 (MAEPRQEFDV…GPMPDLKNVK (264 aa)) are disordered. At Ala2 the chain carries N-acetylalanine. Tyr19 bears the Phosphotyrosine mark. Lys33 participates in a covalent cross-link: Glycyl lysine isopeptide (Lys-Gly) (interchain with G-Cter in ubiquitin). Phosphoserine occurs at positions 35 and 50. The segment covering 50 to 60 (SETSDAKSTPT) has biased composition (polar residues). Residues Thr58 and Thr60 each carry the phosphothreonine modification. A compositionally biased stretch (low complexity) spans 71–89 (EGAPGEQAAAQAPAEIPEG). Thr100 is subject to Phosphothreonine. A compositionally biased stretch (basic and acidic residues) spans 119-135 (KGKDGTGPDDKKTKGAD). Thr144 carries the post-translational modification Phosphothreonine. Arg146 is subject to Omega-N-methylarginine. Position 154 is an N6,N6-dimethyllysine; alternate (Lys154). At Lys154 the chain carries N6-acetyllysine; alternate. Thr160, Thr166, Thr167, and Thr172 each carry phosphothreonine. Residues 163–176 (PAKTTPTPKTSPAT) are compositionally biased toward low complexity. The segment covering 189-200 (KSERGESGKSGD) has biased composition (basic and acidic residues). Phosphoserine occurs at positions 198 and 202. The segment covering 201 to 221 (RSGYSSPGSPGTPGSRSRTPS) has biased composition (low complexity). The residue at position 204 (Tyr204) is a Phosphotyrosine. Ser205, Ser206, and Ser209 each carry phosphoserine. Phosphothreonine occurs at positions 212 and 219. Ser221 carries the phosphoserine modification. Phosphothreonine is present on Thr224. Lys232 carries the N6-acetyllysine modification. Thr238 bears the Phosphothreonine mark. Residues Ser242 and Ser244 each carry the phosphoserine modification. Tau/MAP repeat units follow at residues 251–281 (QAAP…GGGK), 282–312 (VQII…GGGS), 313–343 (VQIV…GGGQ), and 344–375 (VEVK…GGGN). Lys261 participates in a covalent cross-link: Glycyl lysine isopeptide (Lys-Gly) (interchain with G-Cter in ubiquitin). Position 266 is an N6-acetyllysine; alternate (Lys266). Position 266 is an N6-methyllysine; alternate (Lys266). Residue Lys266 forms a Glycyl lysine isopeptide (Lys-Gly) (interchain with G-Cter in ubiquitin); alternate linkage. Ser269 bears the Phosphoserine mark. A Glycyl lysine isopeptide (Lys-Gly) (interchain with G-Cter in ubiquitin) cross-link involves residue Lys274. Lys288 is modified (N6-acetyllysine; alternate). Lys288 is covalently cross-linked (Glycyl lysine isopeptide (Lys-Gly) (interchain with G-Cter in ubiquitin); alternate). Phosphoserine occurs at positions 292 and 296. N6-acetyllysine is present on Lys297. A disulfide bond links Cys298 and Cys329. Ser300 is subject to Phosphoserine. Lys305 carries the N6-acetyllysine; alternate modification. A Glycyl lysine isopeptide (Lys-Gly) (interchain with G-Cter in ubiquitin); alternate cross-link involves residue Lys305. The residue at position 312 (Ser312) is a Phosphoserine. The residue at position 318 (Lys318) is an N6,N6-dimethyllysine; alternate. 3 positions are modified to N6-acetyllysine; alternate: Lys318, Lys324, and Lys328. Residues Lys318, Lys324, and Lys328 each participate in a glycyl lysine isopeptide (Lys-Gly) (interchain with G-Cter in ubiquitin); alternate cross-link. Ser331 is subject to Phosphoserine. 3 positions are modified to N6-acetyllysine; alternate: Lys338, Lys350, and Lys354. Residues Lys338, Lys350, and Lys354 each participate in a glycyl lysine isopeptide (Lys-Gly) (interchain with G-Cter in ubiquitin); alternate cross-link. Arg356 is subject to Omega-N-methylarginine. Ser359 carries the phosphoserine modification. A Glycyl lysine isopeptide (Lys-Gly) (interchain with G-Cter in ubiquitin) cross-link involves residue Lys360. Ser363 carries the phosphoserine modification. The residue at position 376 (Lys376) is an N6-acetyllysine; alternate. Residue Lys376 forms a Glycyl lysine isopeptide (Lys-Gly) (interchain with G-Cter in ubiquitin); alternate linkage. A Glycyl lysine isopeptide (Lys-Gly) (interchain with G-Cter in ubiquitin) cross-link involves residue Lys382. Lys392 bears the N6-acetyllysine; alternate mark. A Glycyl lysine isopeptide (Lys-Gly) (interchain with G-Cter in ubiquitin); alternate cross-link involves residue Lys392. The residue at position 401 (Tyr401) is a Phosphotyrosine. 2 positions are modified to phosphoserine: Ser403 and Ser407. The disordered stretch occupies residues 405–424 (VVSGDTSPRHLSNVSSTGSI). Residues 408-423 (GDTSPRHLSNVSSTGS) are compositionally biased toward polar residues. A Phosphothreonine modification is found at Thr410. Residues Ser411, Ser416, Ser423, and Ser429 each carry the phosphoserine modification. Phosphothreonine is present on Thr434.

In terms of assembly, interacts with MARK1, MARK2, MARK3 and MARK4. Interacts with SQSTM1 when polyubiquitinated. Interacts with PSMC2 through SQSTM1. Interacts with FKBP4. Binds to CSNK1D. Interacts with SGK1. Interacts with PIN1. Interacts with LRRK2. Interacts with LRP1, leading to endocytosis; this interaction is reduced in the presence of LRPAP1/RAP. In terms of processing, polyubiquitinated. Requires functional TRAF6 and may provoke SQSTM1-dependent degradation by the proteasome. Phosphorylation at various serine and threonine residues in S-P or T-P motifs by proline-directed protein kinases (PDPK1, CDK1, CDK5, GSK3, MAPK) (a few sites per protein in interphase, more in mitosis), and at serine residues in K-X-G-S motifs by MAP/microtubule affinity-regulating kinase (MARK1, MARK2, MARK3, MARK4), causing detachment from microtubules, and their disassembly. Phosphorylation at Ser-269 by BRSK1 and BRSK2 in neurons affects ability to bind microtubules and plays a role in neuron polarization. Phosphorylated by PHK. Dephosphorylation at several serine and threonine residues by the serine/threonine phosphatase PPP5C. Post-translationally, O-glycosylated; contains at least 4 GlcNAc. Site-specific or stoichiometric changes in glycosylation may modulate tau function and also play a role in PHF's formation. Expressed in neurons.

The protein localises to the cytoplasm. Its subcellular location is the cytosol. It is found in the cell membrane. The protein resides in the cytoskeleton. It localises to the cell projection. The protein localises to the axon. Its subcellular location is the dendrite. It is found in the secreted. Functionally, promotes microtubule assembly and stability, and might be involved in the establishment and maintenance of neuronal polarity. The C-terminus binds axonal microtubules while the N-terminus binds neural plasma membrane components, suggesting that tau functions as a linker protein between both. Axonal polarity is predetermined by tau localization (in the neuronal cell) in the domain of the cell body defined by the centrosome. The short isoforms allow plasticity of the cytoskeleton whereas the longer isoforms may preferentially play a role in its stabilization. This Bos taurus (Bovine) protein is Microtubule-associated protein tau (MAPT).